Consider the following 219-residue polypeptide: Regulatory protein YeiL (219 aa).

The interval 19–97 is sensory domain; the sequence is RLFHFLARDY…IEECWCLALP (79 aa). Residues Cys-68, Cys-91, Cys-93, and Cys-116 each contribute to the [4Fe-4S] cluster site. Positions 111-131 are dimer interface; sequence FLRKLCVTLSHKNYRNIVSLT. The region spanning 136–199 is the HTH crp-type domain; sequence FPLVNRLAAF…KKGYLIKNRK (64 aa). Positions 158–181 form a DNA-binding region, H-T-H motif; sequence KHTQAAEYLGVSYRHLLYVLAQFI.

In terms of assembly, homodimer. It depends on [4Fe-4S] cluster as a cofactor.

It localises to the cytoplasm. Its function is as follows. Transcription regulator involved in mid-term, stationary-phase viability under nitrogen starvation. Might control expression of the salvage pathways or in some other way repress the recycling of nucleobases to nucleic acids and enhance their use as general nitrogen sources during nitrogen-limited growth. This chain is Regulatory protein YeiL (yeiL), found in Escherichia coli O157:H7.